A 595-amino-acid polypeptide reads, in one-letter code: MSNELDYRPVMLLQNDISLQKYSSPNDDDAWSKYLENPMTAATKAMMRANGDDDGVAALSLLYDYYRVPKEKRIITQGSTGRCDQVKRSCSEYESDISAYESTQIMRYLNDNNSSTHEYSETHKKNSYLSLDCLLNPSKLTLTSGKLDTNGHDDFMATTCDVYEKNSLNTLFDPIHVPSPQQRWQPDSTFKEDTPEPLIFNDILRRQAESTCSEDYIPGEANRDFEYTLESPKAIHIKSGESPMAYLNKGQFYPVNLRTAEIRKCVHLTSNKVKSVVMVVFDNEKNPEEQLKRWKHWHSRQPTAKQRVIDVADYKENCNTVENIEEVAYNALSFVWNVNDEAKIFIGLNCLSTDFSSQKGVKGVPLNLQIDTYDFETGVKRLIHRAVCQIKIFCDKGAERKMRDEERKQFRRKGKCADQNNKDIKASVLPGYRGSDVTYLRPVTDMETHPVLFIPNIHYSNLQRCGVILQSVADNSDRLSLKRSSQSFPKGLEAPPSKQQTSEDSHRVLLYVRRETEEVFDALMLKTPDLKGLRNAISEKYELPEERIFRVYKKCKRGILVNMDNNIIQHYSNHVAFLLDLTDVDGKIQVTLKEL.

A transcription activation region spans residues D29–E92. The Grh/CP2 DB domain occupies A221–I454. Positions S484 to S505 are disordered.

This sequence belongs to the grh/CP2 family. Grainyhead subfamily.

It localises to the nucleus. Its function is as follows. Transcription factor playing important roles in primary neurulation and in the differentiation of stratified epithelia of both ectodermal and endodermal origin. Binds directly to the consensus DNA sequence 5'-AACCGGTT-3' acting as an activator and repressor on distinct target genes. The chain is Grainyhead-like protein 3 homolog (grhl3) from Xenopus laevis (African clawed frog).